Reading from the N-terminus, the 338-residue chain is Phytanoyl-CoA dioxygenase, peroxisomal (338 aa).

The transit peptide at 1 to 30 directs the protein to the peroxisome; that stretch reads MEQLRAAARLQIVLGHLGRPSAGAVVAHPT. N6-succinyllysine occurs at positions 59 and 108. 2-oxoglutarate-binding positions include K120, M157, 175-177, and W193; that span reads HQD. Residues H175 and D177 each contribute to the Fe cation site. An N6-succinyllysine mark is found at K231 and K252. H264 is a binding site for Fe cation. 2 residues coordinate 2-oxoglutarate: S266 and R275. Position 317 is a phosphoserine (S317).

This sequence belongs to the PhyH family. Interacts with FKBP52. Interacts with PHYHIP. Fe cation is required as a cofactor. Requires L-ascorbate as cofactor. It depends on ATP as a cofactor. The cofactor is Mg(2+). In terms of tissue distribution, expressed in liver, kidney, and T-cells, but not in spleen, brain, heart, lung and skeletal muscle.

It localises to the peroxisome. It carries out the reaction phytanoyl-CoA + 2-oxoglutarate + O2 = 2-hydroxyphytanoyl-CoA + succinate + CO2. The enzyme catalyses 3-methylhexadecanoyl-CoA + 2-oxoglutarate + O2 = 2-hydroxy-3-methylhexadecanoyl-CoA + succinate + CO2. It catalyses the reaction hexadecanoyl-CoA + 2-oxoglutarate + O2 = 2-hydroxyhexadecanoyl-CoA + succinate + CO2. The catalysed reaction is octanoyl-CoA + 2-oxoglutarate + O2 = 2-hydroxyoctanoyl-CoA + succinate + CO2. It carries out the reaction decanoyl-CoA + 2-oxoglutarate + O2 = 2-hydroxydecanoyl-CoA + succinate + CO2. The enzyme catalyses 3-methylbutanoyl-CoA + 2-oxoglutarate + O2 = 2-hydroxy-3-methylbutanoyl-CoA + succinate + CO2. It catalyses the reaction heptadecanoyl-CoA + 2-oxoglutarate + O2 = 2-hydroxyheptadecanoyl-CoA + succinate + CO2. The catalysed reaction is eicosanoyl-CoA + 2-oxoglutarate + O2 = 2-hydroxyeicosanoyl-CoA + succinate + CO2. It carries out the reaction octadecanoyl-CoA + 2-oxoglutarate + O2 = 2-hydroxyoctadecanoyl-CoA + succinate + CO2. The enzyme catalyses dodecanoyl-CoA + 2-oxoglutarate + O2 = 2-hydroxydodecanoyl-CoA + succinate + CO2. It catalyses the reaction tetradecanoyl-CoA + 2-oxoglutarate + O2 = 2-hydroxytetradecanoyl-CoA + succinate + CO2. The catalysed reaction is hexanoyl-CoA + 2-oxoglutarate + O2 = 2-hydroxyhexanoyl-CoA + succinate + CO2. It carries out the reaction butanoyl-CoA + 2-oxoglutarate + O2 = 2-hydroxybutanoyl-CoA + succinate + CO2. The enzyme catalyses 3-methylnonanoyl-CoA + 2-oxoglutarate + O2 = 2-hydroxy-3-methylnonanoyl-CoA + succinate + CO2. It catalyses the reaction 3-methylundecanoyl-CoA + 2-oxoglutarate + O2 = 2-hydroxy-3-methylundecanoyl-CoA + succinate + CO2. The catalysed reaction is 3-methyldodecanoyl-CoA + 2-oxoglutarate + O2 = 2-hydroxy-3-methyldodecanoyl-CoA + succinate + CO2. The protein operates within lipid metabolism; fatty acid metabolism. In terms of biological role, catalyzes the 2-hydroxylation of not only racemic phytanoyl-CoA and the isomers of 3-methylhexadecanoyl-CoA, but also a variety of other mono-branched 3-methylacyl-CoA esters (with a chain length of at least seven carbon atoms) and straight-chain acyl-CoA esters (with a chain length longer than four carbon atoms). Does not hydroxylate long and very long straight chain acyl-CoAs or 2-methyl- and 4-methyl-branched acyl-CoAs. This chain is Phytanoyl-CoA dioxygenase, peroxisomal (PHYH), found in Homo sapiens (Human).